The sequence spans 236 residues: Lectin alpha chain (236 aa).

Mn(2+) is bound by residues Glu-8 and Asp-10. The Ca(2+) site is built by Asp-10, Tyr-12, Asn-14, and Asp-19. Tyr-12 is a binding site for a carbohydrate. 3 residues coordinate Mn(2+): Asp-19, His-24, and Ser-34. Residue 99-100 coordinates a carbohydrate; that stretch reads LY. Asp-207 is a binding site for Ca(2+). Arg-227 lines the a carbohydrate pocket.

It belongs to the leguminous lectin family. Equilibrium between homodimer and homotetramer. Oligomerization is pH-dependent with homotetramers forming at pH 6.5 and above. In terms of processing, the beta and gamma chains are produced by partial proteolytic processing of the lectin alpha chain by an asparaginyl endopeptidase. Mixture of 60% alpha lectin and 40% of its beta and gamma proteolytic fragments. In terms of tissue distribution, seed.

Its function is as follows. D-mannose/D-glucose-binding lectin. Has anti-inflammatory activity in rats. Induces histamine release in mast cells from rat. Induces lymphocyte proliferation and IFNG production. The protein is Lectin alpha chain of Cratylia argentea (Cratylia floribunda).